The following is a 409-amino-acid chain: 5-aminolevulinate synthase (409 aa).

Arg21, Ser137, and Lys156 together coordinate succinyl-CoA. The pyridoxal 5'-phosphate site is built by Ser189, His217, and Thr245. Residue Lys248 is part of the active site. An N6-(pyridoxal phosphate)lysine modification is found at Lys248. Pyridoxal 5'-phosphate is bound by residues Ser277 and Thr278. Thr365 contributes to the succinyl-CoA binding site.

It belongs to the class-II pyridoxal-phosphate-dependent aminotransferase family. Homodimer. Pyridoxal 5'-phosphate serves as cofactor.

The catalysed reaction is succinyl-CoA + glycine + H(+) = 5-aminolevulinate + CO2 + CoA. Its pathway is porphyrin-containing compound metabolism; protoporphyrin-IX biosynthesis; 5-aminolevulinate from glycine: step 1/1. In Rhodobacter capsulatus (strain ATCC BAA-309 / NBRC 16581 / SB1003), this protein is 5-aminolevulinate synthase (hemA).